The chain runs to 897 residues: Interference hedgehog (897 aa).

The signal sequence occupies residues 1 to 26 (MSVTRGHKSTPSLLLLFLSVLTSLLA). The Extracellular segment spans residues 27 to 702 (AIPVLQANAP…THNETFNMNP (676 aa)). Ig-like C2-type domains are found at residues 40–147 (PGVR…ATIS), 148–235 (GDKI…RRLE), 244–336 (PSAA…YIQL), and 342–429 (PRIV…LQVN). 3 cysteine pairs are disulfide-bonded: Cys-63–Cys-125, Cys-169–Cys-217, and Cys-272–Cys-320. 2 N-linked (GlcNAc...) asparagine glycosylation sites follow: Asn-96 and Asn-99. 4 N-linked (GlcNAc...) asparagine glycosylation sites follow: Asn-296, Asn-351, Asn-393, and Asn-467. An intrachain disulfide couples Cys-363 to Cys-411. Residues 434–468 (QAGDGMGTGGMGRSSNRNAHNRKQKQMVPPSAPNV) are disordered. 2 consecutive Fibronectin type-III domains span residues 462-571 (PPSA…LQRG) and 579-674 (VPEL…TQRP). Positions 498, 504, and 506 each coordinate heparin. A glycan (N-linked (GlcNAc...) asparagine) is linked at Asn-530. A heparin-binding site is contributed by Arg-545. Asn-561 carries an N-linked (GlcNAc...) asparagine glycan. Residues 666–682 (LKQGRTQRPRSSTTAQP) are compositionally biased toward polar residues. The tract at residues 666–694 (LKQGRTQRPRSSTTAQPTMHTVDTTTPTH) is disordered. Residues 683-694 (TMHTVDTTTPTH) show a composition bias toward low complexity. An N-linked (GlcNAc...) asparagine glycan is attached at Asn-695. A helical transmembrane segment spans residues 703 to 723 (LLTGTISGGALLILLVISACL). Topologically, residues 724-897 (CLCKRRHSRG…SSGSLNSVGV (174 aa)) are cytoplasmic. Disordered regions lie at residues 773-793 (AQQQ…DSQD) and 819-849 (MSSS…NLNQ). Over residues 774 to 784 (QQQQQQLQQQH) the composition is skewed to low complexity.

It belongs to the immunoglobulin superfamily. IHOG family. As to quaternary structure, homodimer. Heterotetramer; 2 iHog chains bind 2 hh chains when facilitated by heparin, heparin is required to promote high-affinity interactions between hh and iHog.

Its subcellular location is the membrane. Its function is as follows. Mediates response to the active Hedgehog (Hh) protein signal in embryos, functioning upstream or at the level of patched (ptc). This Drosophila mojavensis (Fruit fly) protein is Interference hedgehog.